Reading from the N-terminus, the 65-residue chain is Conotoxin VnMLCL-041 (65 aa).

The first 19 residues, 1–19 (MLCLPVFIILLLLASPAAP), serve as a signal peptide directing secretion. Residues 20 to 43 (NPLQTRIQSNLIRAGPEDANIKTD) constitute a propeptide that is removed on maturation. At Lys-64 the chain carries Lysine amide.

Belongs to the conotoxin T superfamily. Expressed by the venom duct.

The protein resides in the secreted. The polypeptide is Conotoxin VnMLCL-041 (Conus ventricosus (Mediterranean cone)).